The primary structure comprises 122 residues: Large ribosomal subunit protein bL12 (122 aa).

The protein belongs to the bacterial ribosomal protein bL12 family. As to quaternary structure, homodimer. Part of the ribosomal stalk of the 50S ribosomal subunit. Forms a multimeric L10(L12)X complex, where L10 forms an elongated spine to which 2 to 4 L12 dimers bind in a sequential fashion. Binds GTP-bound translation factors.

Forms part of the ribosomal stalk which helps the ribosome interact with GTP-bound translation factors. Is thus essential for accurate translation. The chain is Large ribosomal subunit protein bL12 from Cellvibrio japonicus (strain Ueda107) (Pseudomonas fluorescens subsp. cellulosa).